The following is a 65-amino-acid chain: Prokaryotic ubiquitin-like protein UBact (65 aa).

Positions 1–17 are enriched in polar residues; it reads MEVNMPTTEQGQKNKQM. The disordered stretch occupies residues 1–65; that stretch reads MEVNMPTTEQ…ARRYRQRTGE (65 aa). Positions 35-65 are enriched in basic and acidic residues; it reads KVEKPNTEEILKRMRKVDPDQARRYRQRTGE. Residue glutamate 65 forms an Isoglutamyl lysine isopeptide (Glu-Lys) (interchain with K-? in acceptor proteins) linkage.

Belongs to the ubiquitin-like protein UBact family.

May function as a protein modifier covalently attached to lysine residues of substrate proteins. This may serve to target the modified proteins for degradation by proteasomes. This Methylacidiphilum infernorum (isolate V4) (Methylokorus infernorum (strain V4)) protein is Prokaryotic ubiquitin-like protein UBact.